A 316-amino-acid polypeptide reads, in one-letter code: HPr kinase/phosphorylase (316 aa).

Catalysis depends on residues His143 and Lys164. 158–165 (GEAGSGKS) provides a ligand contact to ATP. Ser165 is a binding site for Mg(2+). Asp182 (proton acceptor; for phosphorylation activity. Proton donor; for dephosphorylation activity) is an active-site residue. Positions 206 to 215 (LEVRGLGVLN) are important for the catalytic mechanism of both phosphorylation and dephosphorylation. Glu207 provides a ligand contact to Mg(2+). The active site involves Arg251. The tract at residues 272 to 277 (PVMPGR) is important for the catalytic mechanism of dephosphorylation.

The protein belongs to the HPrK/P family. In terms of assembly, homohexamer. Mg(2+) serves as cofactor.

The enzyme catalyses [HPr protein]-L-serine + ATP = [HPr protein]-O-phospho-L-serine + ADP + H(+). It catalyses the reaction [HPr protein]-O-phospho-L-serine + phosphate + H(+) = [HPr protein]-L-serine + diphosphate. Catalyzes the ATP- as well as the pyrophosphate-dependent phosphorylation of a specific serine residue in HPr, a phosphocarrier protein of the phosphoenolpyruvate-dependent sugar phosphotransferase system (PTS). HprK/P also catalyzes the pyrophosphate-producing, inorganic phosphate-dependent dephosphorylation (phosphorolysis) of seryl-phosphorylated HPr (P-Ser-HPr). The chain is HPr kinase/phosphorylase from Stenotrophomonas maltophilia (strain K279a).